Reading from the N-terminus, the 384-residue chain is Putative sarcosine oxidase (384 aa).

FAD is bound at residue 6–36 (DVVVVGAGIFGSCTAYNCQKIGLKTLLLEQF). Residue cysteine 315 is modified to S-8alpha-FAD cysteine.

It belongs to the MSOX/MTOX family. FAD serves as cofactor.

It carries out the reaction sarcosine + O2 + H2O = formaldehyde + glycine + H2O2. This chain is Putative sarcosine oxidase, found in Caenorhabditis elegans.